The chain runs to 114 residues: ATP synthase subunit beta, mitochondrial (114 aa).

ATP is bound at residue 44 to 51 (GGAGVGKT).

This sequence belongs to the ATPase alpha/beta chains family. As to quaternary structure, F-type ATPases have 2 components, CF(1) - the catalytic core - and CF(0) - the membrane proton channel. CF(1) has five subunits: alpha(3), beta(3), gamma(1), delta(1), epsilon(1). CF(0) has three main subunits: a, b and c.

It localises to the mitochondrion. Its subcellular location is the mitochondrion inner membrane. It catalyses the reaction ATP + H2O + 4 H(+)(in) = ADP + phosphate + 5 H(+)(out). Mitochondrial membrane ATP synthase (F(1)F(0) ATP synthase or Complex V) produces ATP from ADP in the presence of a proton gradient across the membrane which is generated by electron transport complexes of the respiratory chain. F-type ATPases consist of two structural domains, F(1) - containing the extramembraneous catalytic core, and F(0) - containing the membrane proton channel, linked together by a central stalk and a peripheral stalk. During catalysis, ATP synthesis in the catalytic domain of F(1) is coupled via a rotary mechanism of the central stalk subunits to proton translocation. Subunits alpha and beta form the catalytic core in F(1). Rotation of the central stalk against the surrounding alpha(3)beta(3) subunits leads to hydrolysis of ATP in three separate catalytic sites on the beta subunits. The polypeptide is ATP synthase subunit beta, mitochondrial (atp2) (Penicillium glabrum (Penicillium frequentans)).